The primary structure comprises 168 residues: Coiled-coil domain-containing protein 200 (168 aa).

Residues 16–50 (LDRRRWLMAQQQQELQQKEQELKNHQEEEQQSEEK) are a coiled coil. Residues 23–168 (MAQQQQELQQ…LKSTNYIQQW (146 aa)) form a disordered region. The segment covering 31–52 (QQKEQELKNHQEEEQQSEEKLQ) has biased composition (basic and acidic residues). Positions 70 to 82 (SQEQPQPSQQQPS) are enriched in low complexity. Composition is skewed to pro residues over residues 83 to 94 (VQPPSQPPPQPS) and 104 to 117 (GPQP…PQPT). 2 stretches are compositionally biased toward polar residues: residues 124–138 (RCTQ…QDSQ) and 145–168 (PCQS…IQQW).

This Homo sapiens (Human) protein is Coiled-coil domain-containing protein 200.